A 170-amino-acid chain; its full sequence is Protein GrpE (170 aa).

The interval 1 to 29 (MSEEIKNEEIVEEVEATEEVVETPEKSEL) is disordered. The segment covering 10–22 (IVEEVEATEEVVE) has biased composition (acidic residues).

The protein belongs to the GrpE family. As to quaternary structure, homodimer.

Its subcellular location is the cytoplasm. In terms of biological role, participates actively in the response to hyperosmotic and heat shock by preventing the aggregation of stress-denatured proteins, in association with DnaK and GrpE. It is the nucleotide exchange factor for DnaK and may function as a thermosensor. Unfolded proteins bind initially to DnaJ; upon interaction with the DnaJ-bound protein, DnaK hydrolyzes its bound ATP, resulting in the formation of a stable complex. GrpE releases ADP from DnaK; ATP binding to DnaK triggers the release of the substrate protein, thus completing the reaction cycle. Several rounds of ATP-dependent interactions between DnaJ, DnaK and GrpE are required for fully efficient folding. The chain is Protein GrpE from Streptococcus suis (strain 98HAH33).